Here is a 594-residue protein sequence, read N- to C-terminus: Probable ABC transporter-binding protein DR_1571 (594 aa).

An N-terminal signal peptide occupies residues 1-18 (MKKVMMLALALGASTSLA).

The protein belongs to the bacterial solute-binding protein 5 family.

Functionally, probably part of a binding-protein-dependent transport system. This is Probable ABC transporter-binding protein DR_1571 from Deinococcus radiodurans (strain ATCC 13939 / DSM 20539 / JCM 16871 / CCUG 27074 / LMG 4051 / NBRC 15346 / NCIMB 9279 / VKM B-1422 / R1).